The chain runs to 343 residues: Glycerol-3-phosphate dehydrogenase [NAD(P)+] (343 aa).

NADPH is bound by residues Trp29, Arg49, and Lys122. Sn-glycerol 3-phosphate-binding residues include Lys122, Gly150, and Ser152. Ala154 contributes to the NADPH binding site. Positions 205, 258, 268, 269, and 270 each coordinate sn-glycerol 3-phosphate. Catalysis depends on Lys205, which acts as the Proton acceptor. Arg269 contacts NADPH. 2 residues coordinate NADPH: Leu288 and Glu290.

It belongs to the NAD-dependent glycerol-3-phosphate dehydrogenase family.

The protein localises to the cytoplasm. The enzyme catalyses sn-glycerol 3-phosphate + NAD(+) = dihydroxyacetone phosphate + NADH + H(+). It catalyses the reaction sn-glycerol 3-phosphate + NADP(+) = dihydroxyacetone phosphate + NADPH + H(+). It functions in the pathway membrane lipid metabolism; glycerophospholipid metabolism. Catalyzes the reduction of the glycolytic intermediate dihydroxyacetone phosphate (DHAP) to sn-glycerol 3-phosphate (G3P), the key precursor for phospholipid synthesis. This chain is Glycerol-3-phosphate dehydrogenase [NAD(P)+], found in Mesorhizobium japonicum (strain LMG 29417 / CECT 9101 / MAFF 303099) (Mesorhizobium loti (strain MAFF 303099)).